Consider the following 222-residue polypeptide: Small ribosomal subunit protein eS1 (222 aa).

Belongs to the eukaryotic ribosomal protein eS1 family.

This is Small ribosomal subunit protein eS1 from Pyrobaculum calidifontis (strain DSM 21063 / JCM 11548 / VA1).